We begin with the raw amino-acid sequence, 512 residues long: ATP synthase subunit alpha (512 aa).

G169–T176 provides a ligand contact to ATP.

Belongs to the ATPase alpha/beta chains family. In terms of assembly, F-type ATPases have 2 components, CF(1) - the catalytic core - and CF(0) - the membrane proton channel. CF(1) has five subunits: alpha(3), beta(3), gamma(1), delta(1), epsilon(1). CF(0) has three main subunits: a(1), b(2) and c(9-12). The alpha and beta chains form an alternating ring which encloses part of the gamma chain. CF(1) is attached to CF(0) by a central stalk formed by the gamma and epsilon chains, while a peripheral stalk is formed by the delta and b chains.

The protein resides in the cell membrane. The catalysed reaction is ATP + H2O + 4 H(+)(in) = ADP + phosphate + 5 H(+)(out). In terms of biological role, produces ATP from ADP in the presence of a proton gradient across the membrane. The alpha chain is a regulatory subunit. This chain is ATP synthase subunit alpha, found in Buchnera aphidicola subsp. Acyrthosiphon pisum (strain Tuc7).